We begin with the raw amino-acid sequence, 102 residues long: Protamine-2 (102 aa).

Residues 1–102 (MVRYRVRSPS…RTRRRTCRKH (102 aa)) are disordered. Ser8, Ser10, and Ser37 each carry phosphoserine. Positions 39 to 48 (EHVEVYERTH) are enriched in basic and acidic residues. Over residues 49 to 102 (GHSHYRRRHCSRRRLRRIHRQQHRSCRRRKRRSCRHRRRHRRGCRTRRRTCRKH) the composition is skewed to basic residues.

Belongs to the protamine P2 family. In terms of assembly, interacts with TDRP. In terms of processing, proteolytic processing into mature chains is required for histone eviction during spermatogenesis. Transition proteins (TNP1 and TNP2) are required for processing. In terms of tissue distribution, testis.

Its subcellular location is the nucleus. It is found in the chromosome. Its function is as follows. Protamines substitute for histones in the chromatin of sperm during the haploid phase of spermatogenesis. They compact sperm DNA into a highly condensed, stable and inactive complex. The sequence is that of Protamine-2 (PRM2) from Pan paniscus (Pygmy chimpanzee).